We begin with the raw amino-acid sequence, 231 residues long: NADH-ubiquinone oxidoreductase chain 4 (231 aa).

6 helical membrane passes run proline 1 to isoleucine 21, methionine 34 to leucine 54, isoleucine 63 to glycine 85, alanine 89 to tyrosine 111, isoleucine 128 to proline 148, and threonine 169 to leucine 189.

Belongs to the complex I subunit 4 family.

It is found in the mitochondrion membrane. The catalysed reaction is a ubiquinone + NADH + 5 H(+)(in) = a ubiquinol + NAD(+) + 4 H(+)(out). In terms of biological role, core subunit of the mitochondrial membrane respiratory chain NADH dehydrogenase (Complex I) that is believed to belong to the minimal assembly required for catalysis. Complex I functions in the transfer of electrons from NADH to the respiratory chain. The immediate electron acceptor for the enzyme is believed to be ubiquinone. The polypeptide is NADH-ubiquinone oxidoreductase chain 4 (MT-ND4) (Deinagkistrodon acutus (Hundred-pace snake)).